A 339-amino-acid polypeptide reads, in one-letter code: N-acetyl-gamma-glutamyl-phosphate reductase (339 aa).

Residue Cys-145 is part of the active site.

This sequence belongs to the NAGSA dehydrogenase family. Type 1 subfamily.

The protein localises to the cytoplasm. It carries out the reaction N-acetyl-L-glutamate 5-semialdehyde + phosphate + NADP(+) = N-acetyl-L-glutamyl 5-phosphate + NADPH + H(+). It participates in amino-acid biosynthesis; L-arginine biosynthesis; N(2)-acetyl-L-ornithine from L-glutamate: step 3/4. Functionally, catalyzes the NADPH-dependent reduction of N-acetyl-5-glutamyl phosphate to yield N-acetyl-L-glutamate 5-semialdehyde. The protein is N-acetyl-gamma-glutamyl-phosphate reductase of Kosmotoga olearia (strain ATCC BAA-1733 / DSM 21960 / TBF 19.5.1).